We begin with the raw amino-acid sequence, 251 residues long: Pyrroloquinoline-quinone synthase (251 aa).

It belongs to the PqqC family.

It catalyses the reaction 6-(2-amino-2-carboxyethyl)-7,8-dioxo-1,2,3,4,7,8-hexahydroquinoline-2,4-dicarboxylate + 3 O2 = pyrroloquinoline quinone + 2 H2O2 + 2 H2O + H(+). It functions in the pathway cofactor biosynthesis; pyrroloquinoline quinone biosynthesis. In terms of biological role, ring cyclization and eight-electron oxidation of 3a-(2-amino-2-carboxyethyl)-4,5-dioxo-4,5,6,7,8,9-hexahydroquinoline-7,9-dicarboxylic-acid to PQQ. This Klebsiella pneumoniae subsp. pneumoniae (strain ATCC 700721 / MGH 78578) protein is Pyrroloquinoline-quinone synthase.